We begin with the raw amino-acid sequence, 309 residues long: Glycine--tRNA ligase alpha subunit (309 aa).

The protein belongs to the class-II aminoacyl-tRNA synthetase family. As to quaternary structure, tetramer of two alpha and two beta subunits.

The protein localises to the cytoplasm. It carries out the reaction tRNA(Gly) + glycine + ATP = glycyl-tRNA(Gly) + AMP + diphosphate. The chain is Glycine--tRNA ligase alpha subunit from Anaeromyxobacter sp. (strain K).